The primary structure comprises 406 residues: Phosphopentomutase (406 aa).

Mn(2+)-binding residues include Asp-10, Asp-305, His-310, Asp-346, His-347, and His-358.

The protein belongs to the phosphopentomutase family. Requires Mn(2+) as cofactor.

It localises to the cytoplasm. The catalysed reaction is 2-deoxy-alpha-D-ribose 1-phosphate = 2-deoxy-D-ribose 5-phosphate. The enzyme catalyses alpha-D-ribose 1-phosphate = D-ribose 5-phosphate. The protein operates within carbohydrate degradation; 2-deoxy-D-ribose 1-phosphate degradation; D-glyceraldehyde 3-phosphate and acetaldehyde from 2-deoxy-alpha-D-ribose 1-phosphate: step 1/2. Its function is as follows. Isomerase that catalyzes the conversion of deoxy-ribose 1-phosphate (dRib-1-P) and ribose 1-phosphate (Rib-1-P) to deoxy-ribose 5-phosphate (dRib-5-P) and ribose 5-phosphate (Rib-5-P), respectively. The protein is Phosphopentomutase of Vibrio cholerae serotype O1 (strain ATCC 39541 / Classical Ogawa 395 / O395).